Reading from the N-terminus, the 429-residue chain is Melanoma-associated antigen 11 (429 aa).

Disordered stretches follow at residues 1 to 30 and 188 to 215; these read METQ…GDFG and IFGS…IDPE. Residues 194–209 are compositionally biased toward polar residues; that stretch reads DEGSGSQEKEGPSTSP. The MAGE domain occupies 222–421; it reads LHDKIIDLVH…TSYPSLYEDA (200 aa).

In terms of tissue distribution, expressed in tumors of several types, such as melanoma, head and neck squamous cell carcinoma, lung carcinoma and breast carcinoma. Expressed in testis, ovary, prostate, cancerous prostate, breast and adrenal tissue.

It localises to the nucleus. Its subcellular location is the cytoplasm. In terms of biological role, acts as androgen receptor coregulator that increases androgen receptor activity by modulating the receptors interdomain interaction. May play a role in embryonal development and tumor transformation or aspects of tumor progression. In Homo sapiens (Human), this protein is Melanoma-associated antigen 11.